The following is a 118-amino-acid chain: Actin depolymerizing factor ADF (118 aa).

In terms of domain architecture, ADF-H spans 4-118 (GMGVDENCVA…HEMGDLAPLA (115 aa)).

This sequence belongs to the actin-binding proteins ADF family. In terms of assembly, interacts with ACT1 (G-actin); the interaction results in inhibition of actin polymerization. Interacts with DPA; the interaction enhances ADF activity in disassembly of filamentous actin and inhibition of actin polymerization.

Its subcellular location is the cytoplasm. Functionally, inhibits actin polymerization. Promotes actin depolymerization. Strongly sequesters actin monomers (G-actin). Weakly severs actin filaments (F-actin). In Toxoplasma gondii, this protein is Actin depolymerizing factor ADF.